Reading from the N-terminus, the 267-residue chain is NAD kinase 2 (267 aa).

D52 functions as the Proton acceptor in the catalytic mechanism. NAD(+) contacts are provided by residues 52-53 (DG), 124-125 (NE), R151, D153, 164-169 (TAYNKS), and A188.

It belongs to the NAD kinase family. Requires a divalent metal cation as cofactor.

The protein resides in the cytoplasm. The enzyme catalyses NAD(+) + ATP = ADP + NADP(+) + H(+). Functionally, involved in the regulation of the intracellular balance of NAD and NADP, and is a key enzyme in the biosynthesis of NADP. Catalyzes specifically the phosphorylation on 2'-hydroxyl of the adenosine moiety of NAD to yield NADP. In Bacillus subtilis (strain 168), this protein is NAD kinase 2.